Consider the following 174-residue polypeptide: Shikimate kinase (174 aa).

15-20 provides a ligand contact to ATP; the sequence is GTGKST. S19 is a Mg(2+) binding site. Substrate-binding residues include D37, R61, and G82. Position 120 (R120) interacts with ATP. R138 lines the substrate pocket.

The protein belongs to the shikimate kinase family. Monomer. Mg(2+) is required as a cofactor.

It localises to the cytoplasm. The catalysed reaction is shikimate + ATP = 3-phosphoshikimate + ADP + H(+). The protein operates within metabolic intermediate biosynthesis; chorismate biosynthesis; chorismate from D-erythrose 4-phosphate and phosphoenolpyruvate: step 5/7. In terms of biological role, catalyzes the specific phosphorylation of the 3-hydroxyl group of shikimic acid using ATP as a cosubstrate. In Staphylococcus aureus (strain MSSA476), this protein is Shikimate kinase.